The sequence spans 395 residues: FAD-dependent monooxygenase cctM (395 aa).

Residues 1–23 (MEPGTDVRRVLVIGAGAAGLLIA) form the signal peptide. Residues E37, G52, and R112 each coordinate FAD. N-linked (GlcNAc...) asparagine glycosylation is found at N138 and N298. D306 is an FAD binding site.

The protein belongs to the paxM FAD-dependent monooxygenase family. FAD serves as cofactor.

It functions in the pathway mycotoxin biosynthesis. Functionally, FAD-dependent monooxygenase; part of the gene cluster that mediates the biosynthesis of the mycotoxin cyclochlorotine, a hepatotoxic and carcinogenic cyclic chlorinated pentapeptide. The function of cctM within the pathway, if any, remains undetermined. The NRPS cctN initially catalyzes the condensation of L-serine (Ser), Pro, L-2-aminobutyrate (2Abu), Ser, and beta-Phe in this order to produce isocyclotine. After the dichlorination of Pro2 catalyzed by cctP2 to produce isocyclochlorotine, the cctO-mediated transacylation of isocyclochlorotine can furnish cyclochlorotine. The subsequent hydroxylation of cyclochlorotine by cctR yields hydroxycyclochlorotine as the final product. CctP1 probably acts as a phenylalanine aminomutase and provides the uncommon building block beta-Phe. Furthermore, 2Abu can be synthesized from threonine by one of the threonine dehydratases and transaminases localized outside of the cluster. The functions of the remaining proteins encoded by the cluster, cctM and cctT, have not been identified yet. The sequence is that of FAD-dependent monooxygenase cctM from Talaromyces islandicus (Penicillium islandicum).